The following is a 246-amino-acid chain: Proteasome subunit alpha type-6-B (246 aa).

This sequence belongs to the peptidase T1A family. In terms of assembly, component of the 20S core complex of the 26S proteasome. The 26S proteasome is composed of a core protease (CP), known as the 20S proteasome, capped at one or both ends by the 19S regulatory particle (RP/PA700). The 20S proteasome core is composed of 28 subunits that are arranged in four stacked rings, resulting in a barrel-shaped structure. The two end rings are each formed by seven alpha subunits, and the two central rings are each formed by seven beta subunits. The catalytic chamber with the active sites is on the inside of the barrel.

It localises to the cytoplasm. It is found in the nucleus. In terms of biological role, the proteasome is a multicatalytic proteinase complex which is characterized by its ability to cleave peptides with Arg, Phe, Tyr, Leu, and Glu adjacent to the leaving group at neutral or slightly basic pH. The proteasome has an ATP-dependent proteolytic activity. The chain is Proteasome subunit alpha type-6-B (PAA2) from Arabidopsis thaliana (Mouse-ear cress).